We begin with the raw amino-acid sequence, 353 residues long: Photosystem II D2 protein (353 aa).

Position 2 is an N-acetylthreonine (Thr2). Phosphothreonine is present on Thr2. Residues 41–61 form a helical membrane-spanning segment; sequence CAYFALGGWFTGTTFVTSWYT. His118 serves as a coordination point for chlorophyll a. A helical membrane pass occupies residues 125–141; it reads GFMLRQFELARSVQLRP. Residues Gln130 and Asn143 each coordinate pheophytin a. A helical membrane pass occupies residues 153–166; that stretch reads VFVSVFLIYPLGQS. His198 provides a ligand contact to chlorophyll a. The chain crosses the membrane as a helical span at residues 208-228; that stretch reads AALLCAIHGATVENTLFEDGD. A plastoquinone is bound by residues His215 and Phe262. A Fe cation-binding site is contributed by His215. Residue His269 participates in Fe cation binding. A helical membrane pass occupies residues 279 to 295; it reads GLWMSALGVVGLALNLR.

The protein belongs to the reaction center PufL/M/PsbA/D family. As to quaternary structure, PSII is composed of 1 copy each of membrane proteins PsbA, PsbB, PsbC, PsbD, PsbE, PsbF, PsbH, PsbI, PsbJ, PsbK, PsbL, PsbM, PsbT, PsbX, PsbY, PsbZ, Psb30/Ycf12, at least 3 peripheral proteins of the oxygen-evolving complex and a large number of cofactors. It forms dimeric complexes. The cofactor is The D1/D2 heterodimer binds P680, chlorophylls that are the primary electron donor of PSII, and subsequent electron acceptors. It shares a non-heme iron and each subunit binds pheophytin, quinone, additional chlorophylls, carotenoids and lipids. There is also a Cl(-1) ion associated with D1 and D2, which is required for oxygen evolution. The PSII complex binds additional chlorophylls, carotenoids and specific lipids..

The protein resides in the plastid. Its subcellular location is the chloroplast thylakoid membrane. It carries out the reaction 2 a plastoquinone + 4 hnu + 2 H2O = 2 a plastoquinol + O2. Its function is as follows. Photosystem II (PSII) is a light-driven water:plastoquinone oxidoreductase that uses light energy to abstract electrons from H(2)O, generating O(2) and a proton gradient subsequently used for ATP formation. It consists of a core antenna complex that captures photons, and an electron transfer chain that converts photonic excitation into a charge separation. The D1/D2 (PsbA/PsbD) reaction center heterodimer binds P680, the primary electron donor of PSII as well as several subsequent electron acceptors. D2 is needed for assembly of a stable PSII complex. The sequence is that of Photosystem II D2 protein from Morus indica (Mulberry).